The chain runs to 82 residues: uncharacterized protein (82 aa).

In terms of biological role, this protein may be involved in virus assembly. This is an uncharacterized protein from Sulfolobus spindle-shape virus 1 (SSV1).